We begin with the raw amino-acid sequence, 932 residues long: MADINHDGPKADGSQMRERPSAKPLHLYNSEDAKKKVLELNQEEEDNKHEEKRKTFGRTPDGTVFIVPQTHDMVSQLLSPSQPKNLSDLAILAVLASLIFTLYICPTSARKPVFAAIFLFWRAAYNAGIGWLLEGQSKHNRLVLWAKNSHIFENPETGNNPHPTIYKLIKREMETKIPKDYKFEEAPLEYNTWLVFRRVVDLILMCDFVSYCLFAIACFNRPPESWLLFGLRWTTGIVLFIFNVFVKLDAHRVVKDFAWYCYHVLFISIVAHAAQFAFLTLVEEPHIQKIYNPPPPRRMRQNSEKFNPEDRPATAHSDATYTDTGVIYDSVRQPAPMHHIVGLQNTDFHRSIDVTVVLLCFYMFCLATVTPNTIAVRLFLFVHAFVWRLWYALGLGYILDRQSKKKNWTRHFIKHGDTKEEAWRQWKSLYHLSMTMCHASFGAAVWKMYELPSDWFLGLTLLRHVLGAGLLLLQLWTSTSIYDSLGEFGWFCGDFFFDPPSSNLTYSGIYRFLNNPERVLGLAGVWGLALITWNPPIFYLAATAHILNLAFLQFVERPHMQRLYGRKLRAESGVSKTLRQAMPSPVRNWQSAADDYVNSTVEFIEDLLEHARPKLAAGYETIVKDTTALFKTYPARISITRVPQDLAGLDPKQYKLEIEGTPSAPTVEIQKHGGREGELARTPATRTSEFKTLTFEYGAPIRVRWQAPVNHHKKDWIGLYMVTDNQSREVTRISSNGRWVATNKGVYDSTRAEDGILVSDRLVSVNSDEDEGGDCYTGEVEFRGDKLWWTTGVFEFRYHHGGKHHVMALSQAFEIRIARFDEDDVEVDANGTVHRAVEQALLPVIQNCFDRDPEIAPSTPEESFGSLVERDGKFAKRVVFAVHQMFGIEFAPEVVQADGNARNLAWRICNAKKILAPYSMSASRGRNTPTSR.

2 stretches are compositionally biased toward basic and acidic residues: residues 1–21 (MADINHDGPKADGSQMRERPS) and 29–38 (NSEDAKKKVL). The interval 1 to 61 (MADINHDGPK…KRKTFGRTPD (61 aa)) is disordered. Residues 1-88 (MADINHDGPK…SPSQPKNLSD (88 aa)) lie on the Lumenal side of the membrane. Residues 89 to 109 (LAILAVLASLIFTLYICPTSA) traverse the membrane as a helical segment. Over 110–112 (RKP) the chain is Cytoplasmic. The helical transmembrane segment at 113 to 133 (VFAAIFLFWRAAYNAGIGWLL) threads the bilayer. Residues 134 to 198 (EGQSKHNRLV…EYNTWLVFRR (65 aa)) are Lumenal-facing. The helical transmembrane segment at 199-219 (VVDLILMCDFVSYCLFAIACF) threads the bilayer. The Cytoplasmic segment spans residues 220–225 (NRPPES). A helical transmembrane segment spans residues 226-246 (WLLFGLRWTTGIVLFIFNVFV). Topologically, residues 247–261 (KLDAHRVVKDFAWYC) are lumenal. A helical transmembrane segment spans residues 262 to 282 (YHVLFISIVAHAAQFAFLTLV). Over 283–355 (EEPHIQKIYN…TDFHRSIDVT (73 aa)) the chain is Cytoplasmic. Residues 292–317 (NPPPPRRMRQNSEKFNPEDRPATAHS) form a disordered region. Basic and acidic residues predominate over residues 301 to 313 (QNSEKFNPEDRPA). A helical transmembrane segment spans residues 356–376 (VVLLCFYMFCLATVTPNTIAV). R377 is a topological domain (lumenal). The helical transmembrane segment at 378 to 398 (LFLFVHAFVWRLWYALGLGYI) threads the bilayer. The Cytoplasmic portion of the chain corresponds to 399-428 (LDRQSKKKNWTRHFIKHGDTKEEAWRQWKS). Residues 429–449 (LYHLSMTMCHASFGAAVWKMY) form a helical membrane-spanning segment. Residues 450–454 (ELPSD) are Lumenal-facing. A helical membrane pass occupies residues 455-475 (WFLGLTLLRHVLGAGLLLLQL). Residues 476–518 (WTSTSIYDSLGEFGWFCGDFFFDPPSSNLTYSGIYRFLNNPER) are Cytoplasmic-facing. The helical transmembrane segment at 519–539 (VLGLAGVWGLALITWNPPIFY) threads the bilayer. Topologically, residues 540–932 (LAATAHILNL…SRGRNTPTSR (393 aa)) are lumenal.

This sequence belongs to the class VI-like SAM-binding methyltransferase superfamily. CHO2 family.

It is found in the endoplasmic reticulum membrane. It catalyses the reaction a 1,2-diacyl-sn-glycero-3-phosphoethanolamine + S-adenosyl-L-methionine = a 1,2-diacyl-sn-glycero-3-phospho-N-methylethanolamine + S-adenosyl-L-homocysteine + H(+). The protein operates within phospholipid metabolism; phosphatidylcholine biosynthesis. In terms of biological role, catalyzes the first step of the methylation pathway of phosphatidylcholine biosynthesis, the SAM-dependent methylation of phosphatidylethanolamine (PE) to phosphatidylmonomethylethanolamine (PMME). In Phaeosphaeria nodorum (strain SN15 / ATCC MYA-4574 / FGSC 10173) (Glume blotch fungus), this protein is Phosphatidylethanolamine N-methyltransferase (CHO2).